The chain runs to 355 residues: UDP-N-acetylglucosamine--N-acetylmuramyl-(pentapeptide) pyrophosphoryl-undecaprenol N-acetylglucosamine transferase (355 aa).

Residues threonine 15–glycine 17, asparagine 127, arginine 163, serine 191, isoleucine 244, alanine 263–glutamate 268, and glutamine 288 each bind UDP-N-acetyl-alpha-D-glucosamine.

This sequence belongs to the glycosyltransferase 28 family. MurG subfamily.

It is found in the cell inner membrane. The catalysed reaction is di-trans,octa-cis-undecaprenyl diphospho-N-acetyl-alpha-D-muramoyl-L-alanyl-D-glutamyl-meso-2,6-diaminopimeloyl-D-alanyl-D-alanine + UDP-N-acetyl-alpha-D-glucosamine = di-trans,octa-cis-undecaprenyl diphospho-[N-acetyl-alpha-D-glucosaminyl-(1-&gt;4)]-N-acetyl-alpha-D-muramoyl-L-alanyl-D-glutamyl-meso-2,6-diaminopimeloyl-D-alanyl-D-alanine + UDP + H(+). It functions in the pathway cell wall biogenesis; peptidoglycan biosynthesis. Its function is as follows. Cell wall formation. Catalyzes the transfer of a GlcNAc subunit on undecaprenyl-pyrophosphoryl-MurNAc-pentapeptide (lipid intermediate I) to form undecaprenyl-pyrophosphoryl-MurNAc-(pentapeptide)GlcNAc (lipid intermediate II). In Escherichia coli (strain K12 / MC4100 / BW2952), this protein is UDP-N-acetylglucosamine--N-acetylmuramyl-(pentapeptide) pyrophosphoryl-undecaprenol N-acetylglucosamine transferase.